The sequence spans 226 residues: Cytidylate kinase (226 aa).

11 to 19 provides a ligand contact to ATP; it reads GPAGAGKST.

It belongs to the cytidylate kinase family. Type 1 subfamily.

The protein resides in the cytoplasm. The enzyme catalyses CMP + ATP = CDP + ADP. It catalyses the reaction dCMP + ATP = dCDP + ADP. This Pelotomaculum thermopropionicum (strain DSM 13744 / JCM 10971 / SI) protein is Cytidylate kinase.